Reading from the N-terminus, the 1359-residue chain is Tripeptidyl-peptidase 2 (1359 aa).

A disordered region spans residues 45–81 (AASTTTRGGPSPSAGVAPRAMPSSSSSPPSAAEGTTA). The segment covering 64–81 (AMPSSSSSPPSAAEGTTA) has biased composition (low complexity). In terms of domain architecture, Peptidase S8 spans 102–600 (EIGVDRFLAA…HGLLQVDRAF (499 aa)). Catalysis depends on charge relay system residues D126, H353, and S539.

It belongs to the peptidase S8 family.

It carries out the reaction Release of an N-terminal tripeptide from a polypeptide.. Functionally, serine protease that may function in the proteasome pathway. The polypeptide is Tripeptidyl-peptidase 2 (TPP2) (Oryza sativa subsp. japonica (Rice)).